The primary structure comprises 166 residues: Endoribonuclease YbeY (166 aa).

Residues H130, H134, and H140 each contribute to the Zn(2+) site.

Belongs to the endoribonuclease YbeY family. Zn(2+) is required as a cofactor.

It is found in the cytoplasm. Its function is as follows. Single strand-specific metallo-endoribonuclease involved in late-stage 70S ribosome quality control and in maturation of the 3' terminus of the 16S rRNA. This is Endoribonuclease YbeY from Streptococcus uberis (strain ATCC BAA-854 / 0140J).